A 666-amino-acid chain; its full sequence is Probable potassium transport system protein Kup (666 aa).

The next 12 membrane-spanning stretches (helical) occupy residues 16-36 (GFIIALGIVYGDIGTSPLYTM), 58-78 (ISLIIWTLTLITTIKYVLIAL), 100-120 (PWLIIPAMIGGATLLSDGALT), 141-161 (IYQNQTNVIITTLVILIVLFG), 165-185 (FGTGFIGKIFGPVMFIWFSFL), 221-241 (IFILGSIFLATTGAEALYSDL), 253-273 (WPFVKVCIVLSYCGQAAWILA), 294-314 (VYLVSLATLAAIIASQALISG), 343-363 (LYIPVINWILFAVTSCTVLYF), 373-393 (YGLAITITMLMTTILLNYYLI), 399-419 (PFLAHLVMTFFALVEFIFFWA), and 424-444 (FMHGGYVVVILALAIVFVMFI).

This sequence belongs to the HAK/KUP transporter (TC 2.A.72) family.

The protein resides in the cell membrane. It carries out the reaction K(+)(in) + H(+)(in) = K(+)(out) + H(+)(out). In terms of biological role, transport of potassium into the cell. Likely operates as a K(+):H(+) symporter. In Streptococcus pyogenes serotype M6 (strain ATCC BAA-946 / MGAS10394), this protein is Probable potassium transport system protein Kup.